The primary structure comprises 165 residues: Peptide methionine sulfoxide reductase MsrA (165 aa).

Cys-10 is an active-site residue.

It belongs to the MsrA Met sulfoxide reductase family.

It catalyses the reaction L-methionyl-[protein] + [thioredoxin]-disulfide + H2O = L-methionyl-(S)-S-oxide-[protein] + [thioredoxin]-dithiol. It carries out the reaction [thioredoxin]-disulfide + L-methionine + H2O = L-methionine (S)-S-oxide + [thioredoxin]-dithiol. Functionally, has an important function as a repair enzyme for proteins that have been inactivated by oxidation. Catalyzes the reversible oxidation-reduction of methionine sulfoxide in proteins to methionine. This is Peptide methionine sulfoxide reductase MsrA from Campylobacter jejuni subsp. jejuni serotype O:23/36 (strain 81-176).